The primary structure comprises 89 residues: Putative sodium channel toxin Ts30 (89 aa).

Residues 1 to 17 (MFKLAIILALLFFGARA) form the signal peptide. An LCN-type CS-alpha/beta domain is found at 21-85 (RDGYPILSDG…FGDSGTPECH (65 aa)). 4 disulfides stabilise this stretch: Cys31-Cys84, Cys35-Cys59, Cys44-Cys64, and Cys48-Cys66.

As to expression, expressed by the venom gland.

The protein localises to the secreted. This Tityus serrulatus (Brazilian scorpion) protein is Putative sodium channel toxin Ts30.